We begin with the raw amino-acid sequence, 560 residues long: MQSQKPWLAEYPNDIPHELPLPNKTLQSILTDSAARFPDKTAISFYGKKLTFHDILTDALKLAAFLQCNGLQKGDRVAVMLPNCPQTVISYYGVLFAGGIVVQTNPLYTEHELEYQLRDAQVSVIITLDLLFPKAIKMKTLSIVDQILITSVKDYLPFPKNILYPLTQKQKVHIDFDKTANIHTFASCMKQEKTELLTIPKIDPEHDIAVLQYTGGTTGAPKGVMLTHQNILANTEMCAAWMYDVKEGAEKVLGIVPFFHVYGLTAVMNYSIKLGFEMILLPKFDPLETLKIIDKHKPTLFPGAPTIYIGLLHHPELQHYDLSSIKSCLSGSAALPVEVKQKFEKVTGGKLVEGYGLSEASPVTHANFIWGKNKPGSIGCPWPSTDAAIYSEETGELAAPYEHGEIIVKGPQVMKGYWNKPEETAAVLRDGWLFTGDMGYMDEEGFFYIADRKKDIIIAGGYNIYPREVEEALYEHEAIQEIVVAGVPDSYRGETVKAFVVLKKGAKADTEELDAFARSRLAPYKVPKAYEFRKELPKTAVGKILRRRLLEEETENHHIK.

It belongs to the ATP-dependent AMP-binding enzyme family.

It catalyses the reaction a long-chain fatty acid + ATP + CoA = a long-chain fatty acyl-CoA + AMP + diphosphate. The protein is Long-chain-fatty-acid--CoA ligase (lcfA) of Bacillus subtilis (strain 168).